A 316-amino-acid polypeptide reads, in one-letter code: GTP cyclohydrolase FolE2 1 (316 aa).

It belongs to the GTP cyclohydrolase IV family.

It catalyses the reaction GTP + H2O = 7,8-dihydroneopterin 3'-triphosphate + formate + H(+). The protein operates within cofactor biosynthesis; 7,8-dihydroneopterin triphosphate biosynthesis; 7,8-dihydroneopterin triphosphate from GTP: step 1/1. Functionally, converts GTP to 7,8-dihydroneopterin triphosphate. The sequence is that of GTP cyclohydrolase FolE2 1 from Burkholderia lata (strain ATCC 17760 / DSM 23089 / LMG 22485 / NCIMB 9086 / R18194 / 383).